Here is a 281-residue protein sequence, read N- to C-terminus: Ribose-phosphate pyrophosphokinase (281 aa).

ATP-binding positions include 33-35 (DGE) and 90-91 (RQ). H123 and D161 together coordinate Mg(2+). K185 is a catalytic residue. D-ribose 5-phosphate contacts are provided by R187 and D211.

This sequence belongs to the ribose-phosphate pyrophosphokinase family. Class III (archaeal) subfamily. The cofactor is Mg(2+).

The protein localises to the cytoplasm. The enzyme catalyses D-ribose 5-phosphate + ATP = 5-phospho-alpha-D-ribose 1-diphosphate + AMP + H(+). It functions in the pathway metabolic intermediate biosynthesis; 5-phospho-alpha-D-ribose 1-diphosphate biosynthesis; 5-phospho-alpha-D-ribose 1-diphosphate from D-ribose 5-phosphate (route I): step 1/1. Its function is as follows. Involved in the biosynthesis of the central metabolite phospho-alpha-D-ribosyl-1-pyrophosphate (PRPP) via the transfer of pyrophosphoryl group from ATP to 1-hydroxyl of ribose-5-phosphate (Rib-5-P). This is Ribose-phosphate pyrophosphokinase from Halobacterium salinarum (strain ATCC 29341 / DSM 671 / R1).